A 239-amino-acid chain; its full sequence is Probable transcriptional regulatory protein BCQ_0605 (239 aa).

Belongs to the TACO1 family. YeeN subfamily.

It localises to the cytoplasm. The protein is Probable transcriptional regulatory protein BCQ_0605 of Bacillus cereus (strain Q1).